Here is a 127-residue protein sequence, read N- to C-terminus: Major sperm protein 152 (127 aa).

An N-acetylthreonine modification is found at Thr-2. The MSP domain maps to 9-126 (DIQTQPGTKI…RRKNLPIEYN (118 aa)).

Sperm.

Its subcellular location is the cell projection. The protein resides in the pseudopodium. The protein localises to the cytoplasm. It is found in the cytoskeleton. Its function is as follows. Central component in molecular interactions underlying sperm crawling. Forms an extensive filament system that extends from sperm villipoda, along the leading edge of the pseudopod. This is Major sperm protein 152 (msp-152) from Caenorhabditis elegans.